Reading from the N-terminus, the 160-residue chain is Invasion protein IagB (160 aa).

Positions 1–19 are cleaved as a signal peptide; sequence MHYFFIIVIWLLSINTAWA.

The protein belongs to the IagB/IpgF/P19 family.

The polypeptide is Invasion protein IagB (iagB) (Salmonella typhi).